The sequence spans 186 residues: Methyl-CpG-binding domain-containing protein 4 (186 aa).

The CW-type zinc-finger motif lies at 22-77; the sequence is GRLIDTYAAQCDNCHKWRVIDSQEEYEDIRSKMLEDPFNCQKKQGMSCEEPADIDY. Positions 31–69 match the MBD-associated domain (MAD) motif; sequence QCDNCHKWRVIDSQEEYEDIRSKMLEDPFNCQKKQGMSC. Cys32, Cys35, Cys61, and Cys69 together coordinate Zn(2+). In terms of domain architecture, MBD spans 83-153; that stretch reads WVIDKPGLPK…GDFNFTVPKV (71 aa). The segment at 154–186 is disordered; that stretch reads MEDTVPPDPKLGSPFPSTTTTTSEKSSVKQSHN. Residues 166–178 show a composition bias toward low complexity; that stretch reads SPFPSTTTTTSEK.

As to expression, expressed in rosette leaves, buds, flowers, stems, mature seeds and roots.

The protein resides in the nucleus. Functionally, transcriptional regulator that binds CpG, CpNpN and CpNpG (N is A, T, or C) islands in promoters regardless the DNA methylation status. Plays probably a role in gene silencing. The sequence is that of Methyl-CpG-binding domain-containing protein 4 (MBD4) from Arabidopsis thaliana (Mouse-ear cress).